The chain runs to 61 residues: uncharacterized protein (61 aa).

The tract at residues 23-61 (VPTKWQDYKKPGPNQKYTSDGKKRRRIRRSQKSILGVRS) is disordered. A compositionally biased stretch (basic residues) spans 44-53 (KKRRRIRRSQ).

This is an uncharacterized protein from Archaeoglobus fulgidus (strain ATCC 49558 / DSM 4304 / JCM 9628 / NBRC 100126 / VC-16).